Here is a 421-residue protein sequence, read N- to C-terminus: Zinc metalloproteinase-disintegrin-like crotastatin (421 aa).

Residues 10 to 206 enclose the Peptidase M12B domain; sequence KYVKLFLVAD…NMPQCILKKP (197 aa). N-linked (GlcNAc...) asparagine glycosylation is present at N29. Intrachain disulfides connect C121–C201, C161–C185, and C163–C168. H146 is a binding site for Zn(2+). E147 is an active-site residue. H150 and H156 together coordinate Zn(2+). In terms of domain architecture, Disintegrin spans 214–299; that stretch reads PAVCGNYFVE…TECTDRFQRN (86 aa). Positions 216, 219, 221, 223, 226, and 229 each coordinate Ca(2+). Disulfide bonds link C217–C246, C228–C241, C230–C236, C240–C263, C254–C260, C259–C285, C272–C292, C279–C310, C303–C315, C322–C372, C337–C383, C350–C360, C367–C409, and C403–C414. A D/ECD-tripeptide motif is present at residues 278 to 280; that stretch reads ECD. D280, M281, D283, D294, and R295 together coordinate Ca(2+).

Belongs to the venom metalloproteinase (M12B) family. P-III subfamily. P-IIIc sub-subfamily. Homodimer; disulfide-linked. Requires Zn(2+) as cofactor. As to expression, expressed by the venom gland.

The protein localises to the secreted. Its function is as follows. Snake venom zinc metalloprotease that induces apoptosis in vascular endothelial cells (VEC), without degrading the extracellular matrix (it cannot cleave collagen) or inhibiting adhesion of VEC. Has also fibrinogenolytic and hemorrhagic activities. The protein is Zinc metalloproteinase-disintegrin-like crotastatin of Crotalus durissus terrificus (South American rattlesnake).